The chain runs to 1405 residues: Xanthine dehydrogenase (1405 aa).

A 2Fe-2S ferredoxin-type domain is found at 17 to 104 (NKLTFYVNGV…GKHLITVEGI (88 aa)). Positions 56, 61, 64, 86, 125, 128, 161, and 163 each coordinate [2Fe-2S] cluster. The FAD-binding PCMH-type domain maps to 288–474 (FGNEQKVWFR…TKIFVPETVP (187 aa)). FAD is bound by residues 316–323 (IVGGASEI), Phe397, 407–411 (TPAGN), Asp420, Ile464, and Lys483. Mo-molybdopterin-binding residues include Gln833 and Phe864. 2 residues coordinate substrate: Glu868 and Arg946. Position 978 (Arg978) interacts with Mo-molybdopterin. Phe980 is a substrate binding site. Ala1147 contributes to the Mo-molybdopterin binding site. Residue Glu1333 is the Proton acceptor of the active site.

It belongs to the xanthine dehydrogenase family. Homodimer. Requires Mo-molybdopterin as cofactor. [2Fe-2S] cluster is required as a cofactor. It depends on FAD as a cofactor.

Its subcellular location is the cytoplasm. The enzyme catalyses hypoxanthine + NAD(+) + H2O = xanthine + NADH + H(+). It catalyses the reaction xanthine + NAD(+) + H2O = urate + NADH + H(+). Its pathway is purine metabolism. With respect to regulation, completely inhibited by allopurinol and significantly inhibited by adenine. Inhibited by Fe(2+), Cd(2+) and Zn(2+) and strongly inhibited by Cu(2+). Mg(2+) and Mo(2+) have no effect on activity. Its function is as follows. Key enzyme in purine degradation. Catalyzes the oxidation of hypoxanthine to xanthine. Catalyzes the oxidation of xanthine to uric acid. Oxidizes xanthine, hypoxanthine and pterine at high rates. Can also act on purine and guanine. The polypeptide is Xanthine dehydrogenase (Blastobotrys adeninivorans (Yeast)).